A 418-amino-acid chain; its full sequence is Serine hydroxymethyltransferase (418 aa).

(6S)-5,6,7,8-tetrahydrofolate-binding positions include L121 and 125-127 (GHL). K230 is subject to N6-(pyridoxal phosphate)lysine. Residues E246 and 355-357 (SPF) each bind (6S)-5,6,7,8-tetrahydrofolate.

This sequence belongs to the SHMT family. As to quaternary structure, homodimer. The cofactor is pyridoxal 5'-phosphate.

Its subcellular location is the cytoplasm. It catalyses the reaction (6R)-5,10-methylene-5,6,7,8-tetrahydrofolate + glycine + H2O = (6S)-5,6,7,8-tetrahydrofolate + L-serine. It participates in one-carbon metabolism; tetrahydrofolate interconversion. The protein operates within amino-acid biosynthesis; glycine biosynthesis; glycine from L-serine: step 1/1. In terms of biological role, catalyzes the reversible interconversion of serine and glycine with tetrahydrofolate (THF) serving as the one-carbon carrier. This reaction serves as the major source of one-carbon groups required for the biosynthesis of purines, thymidylate, methionine, and other important biomolecules. Also exhibits THF-independent aldolase activity toward beta-hydroxyamino acids, producing glycine and aldehydes, via a retro-aldol mechanism. This Streptococcus pneumoniae (strain ATCC 700669 / Spain 23F-1) protein is Serine hydroxymethyltransferase.